Consider the following 160-residue polypeptide: Endoribonuclease YbeY (160 aa).

H121, H125, and H131 together coordinate Zn(2+).

The protein belongs to the endoribonuclease YbeY family. Zn(2+) is required as a cofactor.

It is found in the cytoplasm. Single strand-specific metallo-endoribonuclease involved in late-stage 70S ribosome quality control and in maturation of the 3' terminus of the 16S rRNA. The chain is Endoribonuclease YbeY from Hydrogenovibrio crunogenus (strain DSM 25203 / XCL-2) (Thiomicrospira crunogena).